A 431-amino-acid chain; its full sequence is Isochorismate synthase MenF (431 aa).

The Proton acceptor role is filled by K190. Catalysis depends on E240, which acts as the Proton donor. Residues E284 and E416 each coordinate Mg(2+).

This sequence belongs to the isochorismate synthase family. Homodimer. Requires Mg(2+) as cofactor.

The enzyme catalyses chorismate = isochorismate. The protein operates within quinol/quinone metabolism; 1,4-dihydroxy-2-naphthoate biosynthesis; 1,4-dihydroxy-2-naphthoate from chorismate: step 1/7. Its pathway is quinol/quinone metabolism; menaquinone biosynthesis. Its function is as follows. Catalyzes the conversion of chorismate to isochorismate. Can also catalyze the reverse reaction, but with a lower efficiency. This chain is Isochorismate synthase MenF, found in Escherichia coli (strain K12).